Consider the following 310-residue polypeptide: Glutarate 2-hydroxylase (310 aa).

H160, D162, and H277 together coordinate Fe cation.

It belongs to the glutarate hydroxylase family. Homotetramer. The cofactor is Fe(2+).

The enzyme catalyses glutarate + 2-oxoglutarate + O2 = (S)-2-hydroxyglutarate + succinate + CO2. It participates in amino-acid degradation. In terms of biological role, acts as an alpha-ketoglutarate-dependent dioxygenase catalyzing hydroxylation of glutarate (GA) to L-2-hydroxyglutarate (L2HG). Functions in a L-lysine degradation pathway that proceeds via cadaverine, glutarate and L-2-hydroxyglutarate. The chain is Glutarate 2-hydroxylase from Shigella flexneri.